The chain runs to 215 residues: Large ribosomal subunit protein uL4 (215 aa).

The segment at 46–72 (TAKSKNRAEVSGGGRKPWAQKGGGRAR) is disordered. A compositionally biased stretch (gly residues) spans 56 to 71 (SGGGRKPWAQKGGGRA).

The protein belongs to the universal ribosomal protein uL4 family. In terms of assembly, part of the 50S ribosomal subunit.

One of the primary rRNA binding proteins, this protein initially binds near the 5'-end of the 23S rRNA. It is important during the early stages of 50S assembly. It makes multiple contacts with different domains of the 23S rRNA in the assembled 50S subunit and ribosome. Functionally, forms part of the polypeptide exit tunnel. The protein is Large ribosomal subunit protein uL4 of Helicobacter pylori (strain J99 / ATCC 700824) (Campylobacter pylori J99).